The primary structure comprises 712 residues: DNA ligase (712 aa).

Positions 1–22 are enriched in low complexity; the sequence is MSTQYDSDSSPAASNSGSADPA. The segment at 1-23 is disordered; sequence MSTQYDSDSSPAASNSGSADPAL. 53-57 contributes to the NAD(+) binding site; that stretch reads DAEFD. The tract at residues 69–93 is disordered; that stretch reads SHPEAVTGPSPTTEVAPSPPESSPF. Residues 104–105 and Glu129 contribute to the NAD(+) site; that span reads SL. Lys131 acts as the N6-AMP-lysine intermediate in catalysis. NAD(+) contacts are provided by Arg152, Glu192, Lys308, and Lys332. Residues Cys426, Cys429, Cys445, and Cys451 each contribute to the Zn(2+) site. The BRCT domain occupies 624-712; the sequence is IQADLLAGLS…GPGKGDAEED (89 aa).

The protein belongs to the NAD-dependent DNA ligase family. LigA subfamily. The cofactor is Mg(2+). Mn(2+) is required as a cofactor.

It carries out the reaction NAD(+) + (deoxyribonucleotide)n-3'-hydroxyl + 5'-phospho-(deoxyribonucleotide)m = (deoxyribonucleotide)n+m + AMP + beta-nicotinamide D-nucleotide.. DNA ligase that catalyzes the formation of phosphodiester linkages between 5'-phosphoryl and 3'-hydroxyl groups in double-stranded DNA using NAD as a coenzyme and as the energy source for the reaction. It is essential for DNA replication and repair of damaged DNA. The sequence is that of DNA ligase from Corynebacterium urealyticum (strain ATCC 43042 / DSM 7109).